Here is a 360-residue protein sequence, read N- to C-terminus: MIGNRVINLLIVATLALAGQTVLALELGQDCVNPVGEAGKCVLFRECQPLVDIYNKPVNTPDDTQFLTESRCGLYERKTLVCCAGVRSKGKTSLPESPNCGVQLTDRVIGGQPTKIDEFPWTALIEYEKPNGRFGFHCGGSVINERYILTAAHCITSIPRGWKVHRVRLGEWDLSSTTDQEDDFYADAPIDLDIEKIIVHPGYNLQDKSHHNDIALIRFNREINYSSTISAICLPLSNSLRNRKHAGLSSYAAGWGKTETASASQKKLKVELTVVDVKDCSPAYQRNGISLDSTQMCAGGIRGKDTCSGDSGGPLMRQMSGSWYLIGVVSFGPQKCGAPGVPGVYTNVAEYVDWIKDNIY.

The signal sequence occupies residues 1–24; that stretch reads MIGNRVINLLIVATLALAGQTVLA. Residues 30–83 enclose the Clip domain; that stretch reads DCVNPVGEAGKCVLFRECQPLVDIYNKPVNTPDDTQFLTESRCGLYERKTLVCC. Intrachain disulfides connect Cys31–Cys82, Cys41–Cys72, Cys47–Cys83, and Cys138–Cys154. Positions 108-360 constitute a Peptidase S1 domain; the sequence is VIGGQPTKID…YVDWIKDNIY (253 aa). Catalysis depends on charge relay system residues His153 and Asp213. N-linked (GlcNAc...) asparagine glycosylation occurs at Asn224. 2 cysteine pairs are disulfide-bonded: Cys280-Cys297 and Cys307-Cys336. Residue Ser311 is the Charge relay system of the active site.

This sequence belongs to the peptidase S1 family. CLIP subfamily. Interacts with SRPN2 in the hemolymph of immune-challenged female mosquitoes; the interaction results in CLIPB4 inhibition. As to expression, in females, expressed in fat body, cuticle, thorax and ovaries.

It localises to the secreted. Functionally, serine protease which plays a role in the innate immune response against protozoan and bacterial pathogens, such as Plasmodium bergei, Staphylococcus aureus, Micrococcus luteus and Escherichia coli, by activating the melanization cascade. Cleaves and activates CLIPB8. In the resistant strain L3-5, involved in the melanization of killed parasite P.berghei ookinetes which results in their clearance. In the susceptible strain G3, appears to be dispensable for ookinete elimination which occurs by lysis. In Anopheles gambiae (African malaria mosquito), this protein is CLIP domain-containing serine protease B4.